The primary structure comprises 57 residues: uncharacterized protein (57 aa).

Residues 9 to 45 (NWQEEIRKIIIERVRREAKKRLLEETRKLRMEMKSSK) are a coiled coil.

This is an uncharacterized protein from Archaeoglobus fulgidus (strain ATCC 49558 / DSM 4304 / JCM 9628 / NBRC 100126 / VC-16).